The sequence spans 159 residues: MPRTRTLANAPIMILNGPNLNLLGQRQPEIYGSDTLADVEALCAKAAAAHGGTVDFRQSNHEGELVDWIHEARLHHVGIVINPAAYSHTSVAILDALNTCDGLPVVEVHISNIHQREEFRHHSYVSLRADGVIAGCGVQGYAFAVERVAALAETGRADA.

Residue Tyr-31 is the Proton acceptor of the active site. Residues Asn-82, His-88, and Asp-95 each coordinate substrate. The Proton donor role is filled by His-109. Residues 110–111 and Arg-120 each bind substrate; that span reads IS.

Belongs to the type-II 3-dehydroquinase family. Homododecamer.

The catalysed reaction is 3-dehydroquinate = 3-dehydroshikimate + H2O. The protein operates within metabolic intermediate biosynthesis; chorismate biosynthesis; chorismate from D-erythrose 4-phosphate and phosphoenolpyruvate: step 3/7. Catalyzes a trans-dehydration via an enolate intermediate. The chain is 3-dehydroquinate dehydratase from Streptomyces avermitilis (strain ATCC 31267 / DSM 46492 / JCM 5070 / NBRC 14893 / NCIMB 12804 / NRRL 8165 / MA-4680).